The chain runs to 60 residues: Metallothionein B (60 aa).

The interval 1–28 (MDPCECSKTGSCNCGGSCKCSNCACTSC) is beta. Cys4, Cys6, Cys12, Cys14, Cys18, Cys20, Cys23, Cys25, Cys28, Cys32, Cys33, Cys35, Cys36, Cys40, Cys43, Cys47, Cys49, Cys54, Cys58, and Cys59 together coordinate a divalent metal cation. The segment at 29-60 (KKSCCPCCPSDCSKCASGCVCKGKTCDTSCCQ) is alpha.

This sequence belongs to the metallothionein superfamily. Type 1 family.

Metallothioneins have a high content of cysteine residues that bind various heavy metals. The polypeptide is Metallothionein B (mtb) (Oncorhynchus mykiss (Rainbow trout)).